The chain runs to 292 residues: ATP synthase subunit a (292 aa).

The next 6 membrane-spanning stretches (helical) occupy residues 37 to 57 (IDSV…FWLC), 96 to 116 (FIAP…AMDM), 144 to 164 (VVPT…LVLC), 192 to 212 (PVFA…EYVA), 230 to 250 (LVFM…SGVL), and 263 to 283 (AIFH…LALI).

This sequence belongs to the ATPase A chain family. F-type ATPases have 2 components, CF(1) - the catalytic core - and CF(0) - the membrane proton channel. CF(1) has five subunits: alpha(3), beta(3), gamma(1), delta(1), epsilon(1). CF(0) has three main subunits: a(1), b(2) and c(9-12). The alpha and beta chains form an alternating ring which encloses part of the gamma chain. CF(1) is attached to CF(0) by a central stalk formed by the gamma and epsilon chains, while a peripheral stalk is formed by the delta and b chains.

It is found in the cell inner membrane. Functionally, key component of the proton channel; it plays a direct role in the translocation of protons across the membrane. This Paracidovorax citrulli (strain AAC00-1) (Acidovorax citrulli) protein is ATP synthase subunit a.